Reading from the N-terminus, the 130-residue chain is Odontogenesis associated phosphoprotein (130 aa).

The signal sequence occupies residues Met-1 to Gly-23.

As to expression, highly expressed in placenta.

The protein resides in the secreted. In terms of biological role, may promote nucleation of hydroxyapatite. The sequence is that of Odontogenesis associated phosphoprotein from Homo sapiens (Human).